Reading from the N-terminus, the 141-residue chain is HTH-type transcriptional repressor NsrR (141 aa).

Residues 2 to 129 (QLTSFTDYGL…DNYTLADLVE (128 aa)) form the HTH rrf2-type domain. The H-T-H motif DNA-binding region spans 28 to 51 (ISEVTEVYGVSRNHMVKIINQLSR). [2Fe-2S] cluster is bound by residues Cys91, Cys96, and Cys102.

The cofactor is [2Fe-2S] cluster.

Its function is as follows. Nitric oxide-sensitive repressor of genes involved in protecting the cell against nitrosative stress. May require iron for activity. The polypeptide is HTH-type transcriptional repressor NsrR (Salmonella choleraesuis (strain SC-B67)).